The primary structure comprises 389 residues: Lipid-A-disaccharide synthase (389 aa).

It belongs to the LpxB family.

The enzyme catalyses a lipid X + a UDP-2-N,3-O-bis[(3R)-3-hydroxyacyl]-alpha-D-glucosamine = a lipid A disaccharide + UDP + H(+). It functions in the pathway bacterial outer membrane biogenesis; LPS lipid A biosynthesis. Condensation of UDP-2,3-diacylglucosamine and 2,3-diacylglucosamine-1-phosphate to form lipid A disaccharide, a precursor of lipid A, a phosphorylated glycolipid that anchors the lipopolysaccharide to the outer membrane of the cell. The chain is Lipid-A-disaccharide synthase from Histophilus somni (strain 2336) (Haemophilus somnus).